The primary structure comprises 211 residues: ATP phosphoribosyltransferase (211 aa).

This sequence belongs to the ATP phosphoribosyltransferase family. Short subfamily. Heteromultimer composed of HisG and HisZ subunits.

Its subcellular location is the cytoplasm. The enzyme catalyses 1-(5-phospho-beta-D-ribosyl)-ATP + diphosphate = 5-phospho-alpha-D-ribose 1-diphosphate + ATP. The protein operates within amino-acid biosynthesis; L-histidine biosynthesis; L-histidine from 5-phospho-alpha-D-ribose 1-diphosphate: step 1/9. Functionally, catalyzes the condensation of ATP and 5-phosphoribose 1-diphosphate to form N'-(5'-phosphoribosyl)-ATP (PR-ATP). Has a crucial role in the pathway because the rate of histidine biosynthesis seems to be controlled primarily by regulation of HisG enzymatic activity. This is ATP phosphoribosyltransferase from Bacillus cereus (strain ATCC 14579 / DSM 31 / CCUG 7414 / JCM 2152 / NBRC 15305 / NCIMB 9373 / NCTC 2599 / NRRL B-3711).